Reading from the N-terminus, the 344-residue chain is Ketol-acid reductoisomerase (NADP(+)) (344 aa).

Residues 2–181 form the KARI N-terminal Rossmann domain; sequence AKVLYEKDIQ…GAARAGVLET (180 aa). Residues 25 to 28, arginine 48, serine 52, and 82 to 85 each bind NADP(+); these read YGSQ and DEMQ. Histidine 107 is a catalytic residue. Glycine 133 is a binding site for NADP(+). The KARI C-terminal knotted domain occupies 182–327; it reads SFQEETETDL…RELRELMPFV (146 aa). Mg(2+)-binding residues include aspartate 190, glutamate 194, glutamate 226, and glutamate 230. Serine 251 contacts substrate.

Belongs to the ketol-acid reductoisomerase family. Mg(2+) is required as a cofactor.

It carries out the reaction (2R)-2,3-dihydroxy-3-methylbutanoate + NADP(+) = (2S)-2-acetolactate + NADPH + H(+). The catalysed reaction is (2R,3R)-2,3-dihydroxy-3-methylpentanoate + NADP(+) = (S)-2-ethyl-2-hydroxy-3-oxobutanoate + NADPH + H(+). It functions in the pathway amino-acid biosynthesis; L-isoleucine biosynthesis; L-isoleucine from 2-oxobutanoate: step 2/4. It participates in amino-acid biosynthesis; L-valine biosynthesis; L-valine from pyruvate: step 2/4. Functionally, involved in the biosynthesis of branched-chain amino acids (BCAA). Catalyzes an alkyl-migration followed by a ketol-acid reduction of (S)-2-acetolactate (S2AL) to yield (R)-2,3-dihydroxy-isovalerate. In the isomerase reaction, S2AL is rearranged via a Mg-dependent methyl migration to produce 3-hydroxy-3-methyl-2-ketobutyrate (HMKB). In the reductase reaction, this 2-ketoacid undergoes a metal-dependent reduction by NADPH to yield (R)-2,3-dihydroxy-isovalerate. This chain is Ketol-acid reductoisomerase (NADP(+)), found in Oceanobacillus iheyensis (strain DSM 14371 / CIP 107618 / JCM 11309 / KCTC 3954 / HTE831).